The sequence spans 332 residues: GTP 3',8-cyclase (332 aa).

Positions 7–221 constitute a Radical SAM core domain; it reads SYDRLHDYVR…FDTCKDNGLA (215 aa). R16 contributes to the GTP binding site. [4Fe-4S] cluster is bound by residues C23 and C27. Y29 contributes to the S-adenosyl-L-methionine binding site. C30 provides a ligand contact to [4Fe-4S] cluster. R66 serves as a coordination point for GTP. S-adenosyl-L-methionine is bound at residue G70. T97 lines the GTP pocket. S121 contacts S-adenosyl-L-methionine. GTP is bound at residue K158. M192 serves as a coordination point for S-adenosyl-L-methionine. Residues C256 and C259 each coordinate [4Fe-4S] cluster. A GTP-binding site is contributed by 261 to 263; sequence RLR. Residue C273 participates in [4Fe-4S] cluster binding.

It belongs to the radical SAM superfamily. MoaA family. Monomer and homodimer. [4Fe-4S] cluster serves as cofactor.

The enzyme catalyses GTP + AH2 + S-adenosyl-L-methionine = (8S)-3',8-cyclo-7,8-dihydroguanosine 5'-triphosphate + 5'-deoxyadenosine + L-methionine + A + H(+). The protein operates within cofactor biosynthesis; molybdopterin biosynthesis. Its function is as follows. Catalyzes the cyclization of GTP to (8S)-3',8-cyclo-7,8-dihydroguanosine 5'-triphosphate. The chain is GTP 3',8-cyclase from Lactiplantibacillus plantarum (strain ATCC BAA-793 / NCIMB 8826 / WCFS1) (Lactobacillus plantarum).